The following is a 423-amino-acid chain: Serine--tRNA ligase (423 aa).

An L-serine-binding site is contributed by 229–231 (TAE). ATP is bound at residue 260–262 (RKE). Residue Glu283 coordinates L-serine. ATP is bound at residue 347-350 (EISS). Ser383 provides a ligand contact to L-serine.

This sequence belongs to the class-II aminoacyl-tRNA synthetase family. Type-1 seryl-tRNA synthetase subfamily. As to quaternary structure, homodimer. The tRNA molecule binds across the dimer.

Its subcellular location is the cytoplasm. It carries out the reaction tRNA(Ser) + L-serine + ATP = L-seryl-tRNA(Ser) + AMP + diphosphate + H(+). The enzyme catalyses tRNA(Sec) + L-serine + ATP = L-seryl-tRNA(Sec) + AMP + diphosphate + H(+). Its pathway is aminoacyl-tRNA biosynthesis; selenocysteinyl-tRNA(Sec) biosynthesis; L-seryl-tRNA(Sec) from L-serine and tRNA(Sec): step 1/1. Catalyzes the attachment of serine to tRNA(Ser). Is also able to aminoacylate tRNA(Sec) with serine, to form the misacylated tRNA L-seryl-tRNA(Sec), which will be further converted into selenocysteinyl-tRNA(Sec). The sequence is that of Serine--tRNA ligase from Syntrophotalea carbinolica (strain DSM 2380 / NBRC 103641 / GraBd1) (Pelobacter carbinolicus).